The following is a 202-amino-acid chain: MKVLTARQQQVYDLIRDHIAQTGMPPTRAEIAQQLGFRSPNAAEEHLKALARKGVIEIVSGASRGIRLLMEEETGIPLVGRVAAGEPLLAQEHIECHYQVDPAMFKPSADFLLRVSGMSMKDIGIMDGDLLAVHKTEDVRNGQIVVARIDDEVTVKRLKKQGNMVHLLAENEEFAPIVVDLRQQSFSIEGLAVGVIRNSDWS.

The segment at residues 28-48 (RAEIAQQLGFRSPNAAEEHLK) is a DNA-binding region (H-T-H motif). Catalysis depends on for autocatalytic cleavage activity residues serine 119 and lysine 156.

Belongs to the peptidase S24 family. In terms of assembly, homodimer.

It carries out the reaction Hydrolysis of Ala-|-Gly bond in repressor LexA.. Functionally, represses a number of genes involved in the response to DNA damage (SOS response), including recA and lexA. Binds to the 16 bp palindromic sequence 5'-CTGTATATATATACAG-3'. In the presence of single-stranded DNA, RecA interacts with LexA causing an autocatalytic cleavage which disrupts the DNA-binding part of LexA, leading to derepression of the SOS regulon and eventually DNA repair. The polypeptide is LexA repressor (Pectobacterium carotovorum subsp. carotovorum (strain PC1)).